Reading from the N-terminus, the 97-residue chain is Aspartyl/glutamyl-tRNA(Asn/Gln) amidotransferase subunit C (97 aa).

The disordered stretch occupies residues 68–97 (ETGFTQEEALSNAPQQSQGQFRTPKVVESA). The span at 70–88 (GFTQEEALSNAPQQSQGQF) shows a compositional bias: polar residues.

Belongs to the GatC family. As to quaternary structure, heterotrimer of A, B and C subunits.

It catalyses the reaction L-glutamyl-tRNA(Gln) + L-glutamine + ATP + H2O = L-glutaminyl-tRNA(Gln) + L-glutamate + ADP + phosphate + H(+). The catalysed reaction is L-aspartyl-tRNA(Asn) + L-glutamine + ATP + H2O = L-asparaginyl-tRNA(Asn) + L-glutamate + ADP + phosphate + 2 H(+). In terms of biological role, allows the formation of correctly charged Asn-tRNA(Asn) or Gln-tRNA(Gln) through the transamidation of misacylated Asp-tRNA(Asn) or Glu-tRNA(Gln) in organisms which lack either or both of asparaginyl-tRNA or glutaminyl-tRNA synthetases. The reaction takes place in the presence of glutamine and ATP through an activated phospho-Asp-tRNA(Asn) or phospho-Glu-tRNA(Gln). In Akkermansia muciniphila (strain ATCC BAA-835 / DSM 22959 / JCM 33894 / BCRC 81048 / CCUG 64013 / CIP 107961 / Muc), this protein is Aspartyl/glutamyl-tRNA(Asn/Gln) amidotransferase subunit C.